The chain runs to 144 residues: MADRLTQLQDAVNSLADQFCNAIGVLQQCGPPASFSNIQTAINKDQPANSTEEYAQLFAALIARTAKDIDVLIDSLPSEESTAALQAASLYKLEEENHEAATCLEDVVYRGDMLLEKIQSALADIAQSQLKTRSGTHSQSLPDS.

The protein belongs to the Mediator complex subunit 21 family. Component of the Mediator complex, which is composed of MED1, MED4, MED6, MED7, MED8, MED9, MED10, MED11, MED12, MED13, MED13L, MED14, MED15, MED16, MED17, MED18, MED19, MED20, MED21, MED22, MED23, MED24, MED25, MED26, MED27, MED29, MED30, MED31, CCNC, CDK8 and CDC2L6/CDK11. The MED12, MED13, CCNC and CDK8 subunits form a distinct module termed the CDK8 module. Mediator containing the CDK8 module is less active than Mediator lacking this module in supporting transcriptional activation. Individual preparations of the Mediator complex lacking one or more distinct subunits have been variously termed ARC, CRSP, DRIP, PC2, SMCC and TRAP. Interacts with PPARG. Interacts with THRA in a ligand-dependent fashion.

Its subcellular location is the nucleus. In terms of biological role, component of the Mediator complex, a coactivator involved in the regulated transcription of nearly all RNA polymerase II-dependent genes. Mediator functions as a bridge to convey information from gene-specific regulatory proteins to the basal RNA polymerase II transcription machinery. Mediator is recruited to promoters by direct interactions with regulatory proteins and serves as a scaffold for the assembly of a functional preinitiation complex with RNA polymerase II and the general transcription factors. This Pongo abelii (Sumatran orangutan) protein is Mediator of RNA polymerase II transcription subunit 21 (MED21).